We begin with the raw amino-acid sequence, 356 residues long: MARHIKVLIVDDSALVRQTLTDIFSADPELEVVGTASDPFVAVKRMETVVPDVILLDVAMPRMDGLTFLRKIMSQHPIPVVICSAVTEQGAEASFKAMEYGAVEIIQKPKVSTKQFLEESSIRICDAVKAAARAQLRKLAAKRFEVTPKLSADAMLPANAGRSVVQRTEKVVVVGASTGGTEALRVLLEAMPPDCPPIAIVQHMPEHFTAAFAGRLNSTCRIQVKEASDGDVMQRGQALIAPGNLHLLLKRSGSRYYVETKEGPLVRRHRPSVDVLFRSAARYAGNNAVAAIMTGMGDDGAAGMKELHETGAYTIAQDEATCVVYGMPHEAVKLGGVDAVLPLGALAAAIVKACNS.

The Response regulatory domain occupies lysine 6–arginine 123. At aspartate 57 the chain carries 4-aspartylphosphate. The CheB-type methylesterase domain maps to valine 165–serine 356. Catalysis depends on residues serine 177, histidine 203, and aspartate 299.

It belongs to the CheB family. Phosphorylated by CheA. Phosphorylation of the N-terminal regulatory domain activates the methylesterase activity.

The protein resides in the cytoplasm. It catalyses the reaction [protein]-L-glutamate 5-O-methyl ester + H2O = L-glutamyl-[protein] + methanol + H(+). It carries out the reaction L-glutaminyl-[protein] + H2O = L-glutamyl-[protein] + NH4(+). Functionally, involved in chemotaxis. Part of a chemotaxis signal transduction system that modulates chemotaxis in response to various stimuli. Catalyzes the demethylation of specific methylglutamate residues introduced into the chemoreceptors (methyl-accepting chemotaxis proteins or MCP) by CheR. Also mediates the irreversible deamidation of specific glutamine residues to glutamic acid. The polypeptide is Protein-glutamate methylesterase/protein-glutamine glutaminase 2 (Oleidesulfovibrio alaskensis (strain ATCC BAA-1058 / DSM 17464 / G20) (Desulfovibrio alaskensis)).